The following is a 694-amino-acid chain: MARDLIFEIGTEEIPARFMNPALEQMAAVASQLLQEYRLPCQKVATYGTPRRLALYLTALAENQEELVQEIKGPPVKAAFTADGQPTKAALGFARSMGVAVEELVTREYNGGQYVFAIKREQGRPAVTVLPELLLAVVNALSFPKPMRWGSLEIRFARPIRWLLALFGSEVIPVELAGLTASNQTYGHRFLAPGPHQVPTASAYFQVLEENYVLVDQHRRRQLIWEQITGLASREGGRVEKDPELLEEITYLVEYPTALAGHFDPEYLKLPQEVVITPMRDHQRYFPVWNAQGELLPRFITVHNGTADHLENISRGNERVLAARLADAAFFYQEDRQTPLAAKVPKLEEIVFQESLGTMLAKTRRLQRLAVNLVNTLDLPAELVPLVERTAELAKADLVTAMVYEFPELQGIMGSYYAAHDGERAEVCQGIRQHYWPRFAGDRLPDSLTGMVVGLADRLDTLVGCFGAGLIPTGSQDPYALRRQATGVVTIAVEFNLKFSLTASIAAAYEGYTAGGIQLARPLDVVQEQLVQFCRQRLEHLLEEKGYRYDVIQACLAAGSDDLAAAYHRTRDLSAFREEEGFAALQTAFTRAFNLARQAREKYHLRPEALQEKAEAELYRALMETRHQAEPRLRAGDYLAALKAMAALRGPIDAFFDNVLVMAPDMEVRNNRLALLQAIVNLVFQIADFSRLVP.

Belongs to the class-II aminoacyl-tRNA synthetase family. Tetramer of two alpha and two beta subunits.

It localises to the cytoplasm. It carries out the reaction tRNA(Gly) + glycine + ATP = glycyl-tRNA(Gly) + AMP + diphosphate. In Moorella thermoacetica (strain ATCC 39073 / JCM 9320), this protein is Glycine--tRNA ligase beta subunit.